Consider the following 197-residue polypeptide: uncharacterized protein (197 aa).

A signal peptide spans 1–30; the sequence is MSTYIIINIALLIAIVALIFFLSKKTKSEA.

This is an uncharacterized protein from Acanthamoeba polyphaga (Amoeba).